We begin with the raw amino-acid sequence, 1111 residues long: ATP-dependent DNA helicase mph1 (1111 aa).

Acidic residues-rich tracts occupy residues 1–18 (MSVSGDDSDDYFDHEIDD) and 47–65 (VFDESDISIDQGDGEDEFQ). Disordered stretches follow at residues 1–81 (MSVS…EDVE), 101–144 (FVTQ…HQPD), 210–240 (AFDSDLSLSPPRTTSQATRGPPVQSQFRTNR), and 259–280 (IPSQRGEQILSPPEKNEPPTHH). Polar residues-rich tracts occupy residues 132 to 143 (PTTTTVDASHQP) and 215 to 238 (LSLSPPRTTSQATRGPPVQSQFRT). Positions 306 to 474 (IAQRGLFHNL…AVIDGLGIAK (169 aa)) constitute a Helicase ATP-binding domain. 319–326 (LPTGLGKT) lines the ATP pocket. A DEAH box motif is present at residues 422 to 425 (DEAH). The Helicase C-terminal domain maps to 644–818 (YLKQVVLNHF…GTRFTFHDDT (175 aa)). 3 disordered regions span residues 836–898 (IDIP…RKPT), 998–1047 (SVLS…CTPE), and 1092–1111 (AERHVSRKRNRFVLDDDTEE). Basic residues predominate over residues 852-864 (KRARPPKRPPKKF).

Belongs to the DEAD box helicase family. DEAH subfamily. FANCM sub-subfamily. In terms of assembly, interacts with the MHF histone-fold complex to form the FANCM-MHF complex.

The protein resides in the nucleus. The enzyme catalyses ATP + H2O = ADP + phosphate + H(+). In terms of biological role, ATP-dependent DNA helicase involved in DNA damage repair by homologous recombination and in genome maintenance. Capable of unwinding D-loops. Plays a role in limiting crossover recombinants during mitotic DNA double-strand break (DSB) repair. Component of a FANCM-MHF complex which promotes gene conversion at blocked replication forks, probably by reversal of the stalled fork. In Neosartorya fischeri (strain ATCC 1020 / DSM 3700 / CBS 544.65 / FGSC A1164 / JCM 1740 / NRRL 181 / WB 181) (Aspergillus fischerianus), this protein is ATP-dependent DNA helicase mph1.